We begin with the raw amino-acid sequence, 123 residues long: Large ribosomal subunit protein bL12 (123 aa).

This sequence belongs to the bacterial ribosomal protein bL12 family. In terms of assembly, homodimer. Part of the ribosomal stalk of the 50S ribosomal subunit. Forms a multimeric L10(L12)X complex, where L10 forms an elongated spine to which 2 to 4 L12 dimers bind in a sequential fashion. Binds GTP-bound translation factors.

Its function is as follows. Forms part of the ribosomal stalk which helps the ribosome interact with GTP-bound translation factors. Is thus essential for accurate translation. This Finegoldia magna (strain ATCC 29328 / DSM 20472 / WAL 2508) (Peptostreptococcus magnus) protein is Large ribosomal subunit protein bL12.